Reading from the N-terminus, the 307-residue chain is MEIQFLGTGAGQPSKSRNTQAIALKMLDERNEIWLFDCGEATQHQILNTTIKPRKITKIFITHLHGDHIFGLPGFLSSRSFQSSDEQTDLELYGPVGIKDFVLTALRISGSRLAYRINFHEIDSAGKIFEDDSFEVHTDLLDHTIFCLGYRVVEKNRIGELDANALKEAGLPFGPLFGKIKKGEIVQYEGKTFDPKDYIGADKAGKIVTILGDTRKSNVAVRLAYGADLLVHEATYEANESKMAKAHGHSTTKQAADVAKEAGVNRLLLTHISARYVGPLVGQLVREAQTVHSNTFVVKDFYEEKIG.

Residues H63, H65, D67, H68, H143, D213, and H271 each contribute to the Zn(2+) site. D67 (proton acceptor) is an active-site residue.

This sequence belongs to the RNase Z family. In terms of assembly, homodimer. Requires Zn(2+) as cofactor.

It catalyses the reaction Endonucleolytic cleavage of RNA, removing extra 3' nucleotides from tRNA precursor, generating 3' termini of tRNAs. A 3'-hydroxy group is left at the tRNA terminus and a 5'-phosphoryl group is left at the trailer molecule.. Functionally, zinc phosphodiesterase, which displays some tRNA 3'-processing endonuclease activity. Probably involved in tRNA maturation, by removing a 3'-trailer from precursor tRNA. In Lactococcus lactis subsp. lactis (strain IL1403) (Streptococcus lactis), this protein is Ribonuclease Z.